Here is a 648-residue protein sequence, read N- to C-terminus: Copper methylamine oxidase (648 aa).

The propeptide occupies 1-9; it reads MTLNAESEA. Residue 299 to 310 participates in substrate binding; it reads AFDSGEYNIGNM. The active-site Proton acceptor is D301. C320 and C346 are oxidised to a cystine. 382-387 lines the substrate pocket; it reads VANYEY. The active-site Schiff-base intermediate with substrate; via topaquinone is Y385. At Y385 the chain carries 2',4',5'-topaquinone. Cu cation contacts are provided by H436 and H438. Mn(2+) is bound by residues D445, F446, and D584. H595 is a Cu cation binding site. The segment at 629–648 is disordered; the sequence is PTSTSTTQTGEADTCCHTDK.

Belongs to the copper/topaquinone oxidase family. Homodimer. It depends on Cu cation as a cofactor. The cofactor is Zn(2+). Requires L-topaquinone as cofactor. Mn(2+) serves as cofactor. Post-translationally, topaquinone (TPQ) is generated by copper-dependent autoxidation of a specific tyrosyl residue.

It catalyses the reaction a primary methyl amine + O2 + H2O = an aldehyde + H2O2 + NH4(+). The sequence is that of Copper methylamine oxidase (maoII) from Arthrobacter sp. (strain P1).